The chain runs to 353 residues: Photosystem II protein D1 (353 aa).

Residue threonine 2 is modified to N-acetylthreonine. Threonine 2 carries the post-translational modification Phosphothreonine. The next 3 helical transmembrane spans lie at 29-46 (YIGW…TATS), 118-133 (HFLL…EWEL), and 142-156 (WIAV…AATA). Position 118 (histidine 118) interacts with chlorophyll a. Pheophytin a is bound at residue tyrosine 126. Positions 170 and 189 each coordinate [CaMn4O5] cluster. The helical transmembrane segment at 197-218 (FHMLGVAGVFGGSLFSAMHGSL) threads the bilayer. Histidine 198 contacts chlorophyll a. Residues histidine 215 and 264-265 (SF) contribute to the a quinone site. Position 215 (histidine 215) interacts with Fe cation. A Fe cation-binding site is contributed by histidine 272. The chain crosses the membrane as a helical span at residues 274-288 (FLAAWPVVGIWFTAL). The [CaMn4O5] cluster site is built by histidine 332, glutamate 333, aspartate 342, and alanine 344. Residues 345–353 (AVEAPSING) constitute a propeptide that is removed on maturation.

This sequence belongs to the reaction center PufL/M/PsbA/D family. PSII is composed of 1 copy each of membrane proteins PsbA, PsbB, PsbC, PsbD, PsbE, PsbF, PsbH, PsbI, PsbJ, PsbK, PsbL, PsbM, PsbT, PsbX, PsbY, PsbZ, Psb30/Ycf12, at least 3 peripheral proteins of the oxygen-evolving complex and a large number of cofactors. It forms dimeric complexes. The D1/D2 heterodimer binds P680, chlorophylls that are the primary electron donor of PSII, and subsequent electron acceptors. It shares a non-heme iron and each subunit binds pheophytin, quinone, additional chlorophylls, carotenoids and lipids. D1 provides most of the ligands for the Mn4-Ca-O5 cluster of the oxygen-evolving complex (OEC). There is also a Cl(-1) ion associated with D1 and D2, which is required for oxygen evolution. The PSII complex binds additional chlorophylls, carotenoids and specific lipids. is required as a cofactor. Tyr-161 forms a radical intermediate that is referred to as redox-active TyrZ, YZ or Y-Z. Post-translationally, C-terminally processed by CTPA; processing is essential to allow assembly of the oxygen-evolving complex and thus photosynthetic growth.

It is found in the plastid. Its subcellular location is the chloroplast thylakoid membrane. The catalysed reaction is 2 a plastoquinone + 4 hnu + 2 H2O = 2 a plastoquinol + O2. Its function is as follows. Photosystem II (PSII) is a light-driven water:plastoquinone oxidoreductase that uses light energy to abstract electrons from H(2)O, generating O(2) and a proton gradient subsequently used for ATP formation. It consists of a core antenna complex that captures photons, and an electron transfer chain that converts photonic excitation into a charge separation. The D1/D2 (PsbA/PsbD) reaction center heterodimer binds P680, the primary electron donor of PSII as well as several subsequent electron acceptors. This is Photosystem II protein D1 from Lotus japonicus (Lotus corniculatus var. japonicus).